Consider the following 406-residue polypeptide: Cysteine desulfurase (406 aa).

Position 226 is an N6-(pyridoxal phosphate)lysine (Lys-226). The Cysteine persulfide intermediate role is filled by Cys-364.

The protein belongs to the class-V pyridoxal-phosphate-dependent aminotransferase family. Csd subfamily. As to quaternary structure, homodimer. Interacts with SufE and the SufBCD complex composed of SufB, SufC and SufD. The interaction with SufE is required to mediate the direct transfer of the sulfur atom from the S-sulfanylcysteine. The cofactor is pyridoxal 5'-phosphate.

It localises to the cytoplasm. It carries out the reaction (sulfur carrier)-H + L-cysteine = (sulfur carrier)-SH + L-alanine. The enzyme catalyses L-selenocysteine + AH2 = hydrogenselenide + L-alanine + A + H(+). Its pathway is cofactor biosynthesis; iron-sulfur cluster biosynthesis. In terms of biological role, cysteine desulfurases mobilize the sulfur from L-cysteine to yield L-alanine, an essential step in sulfur metabolism for biosynthesis of a variety of sulfur-containing biomolecules. Component of the suf operon, which is activated and required under specific conditions such as oxidative stress and iron limitation. Acts as a potent selenocysteine lyase in vitro, that mobilizes selenium from L-selenocysteine. Selenocysteine lyase activity is however unsure in vivo. The chain is Cysteine desulfurase from Salmonella gallinarum (strain 287/91 / NCTC 13346).